The following is a 368-amino-acid chain: Aspartate-semialdehyde dehydrogenase (368 aa).

Residues 10-13 (RGMV), 37-38 (TS), and Gln-74 each bind NADP(+). Arg-103 contacts phosphate. Cys-136 serves as the catalytic Acyl-thioester intermediate. Position 136 is an S-cysteinyl cysteine; in inhibited form (Cys-136). Gln-163 contributes to the substrate binding site. NADP(+)-binding positions include 166–167 (SG) and Pro-194. Substrate is bound at residue Glu-242. Lys-245 serves as a coordination point for phosphate. Arg-268 provides a ligand contact to substrate. His-275 serves as the catalytic Proton acceptor. Position 351 (Gln-351) interacts with NADP(+).

This sequence belongs to the aspartate-semialdehyde dehydrogenase family. Homodimer.

The enzyme catalyses L-aspartate 4-semialdehyde + phosphate + NADP(+) = 4-phospho-L-aspartate + NADPH + H(+). It participates in amino-acid biosynthesis; L-lysine biosynthesis via DAP pathway; (S)-tetrahydrodipicolinate from L-aspartate: step 2/4. The protein operates within amino-acid biosynthesis; L-methionine biosynthesis via de novo pathway; L-homoserine from L-aspartate: step 2/3. It functions in the pathway amino-acid biosynthesis; L-threonine biosynthesis; L-threonine from L-aspartate: step 2/5. Functionally, catalyzes the NADPH-dependent formation of L-aspartate-semialdehyde (L-ASA) by the reductive dephosphorylation of L-aspartyl-4-phosphate. In Salmonella typhi, this protein is Aspartate-semialdehyde dehydrogenase.